Here is a 479-residue protein sequence, read N- to C-terminus: Glycogen synthase (479 aa).

Residue Lys-15 coordinates ADP-alpha-D-glucose.

It belongs to the glycosyltransferase 1 family. Bacterial/plant glycogen synthase subfamily.

The catalysed reaction is [(1-&gt;4)-alpha-D-glucosyl](n) + ADP-alpha-D-glucose = [(1-&gt;4)-alpha-D-glucosyl](n+1) + ADP + H(+). The protein operates within glycan biosynthesis; glycogen biosynthesis. Its function is as follows. Synthesizes alpha-1,4-glucan chains using ADP-glucose. The protein is Glycogen synthase of Roseobacter denitrificans (strain ATCC 33942 / OCh 114) (Erythrobacter sp. (strain OCh 114)).